Here is a 435-residue protein sequence, read N- to C-terminus: MNSQTSVVGVHYRVGRKIGEGSFGVIFDGMNLLNNQLIAIKFEPKKSEAPQLRDEYRTYKLLVGNAGIPNVYYFGQEGLHNILVIDLLGPSLEDLFEWCGRRFSVKTVAMTAKQMLSRVQTIHEKNLVYRDIKPDNFLIGRPSSRNANMVYMVDFGMAKYYRDPKTKQHIPYSERKSLSGTARYMSINTHLGREQSRRDDLESLGHVFMYFLRGSLPWQGLKAANNKHKYEKISEKKQSTSISELCAGFPNEFSKYMTYVRSLEFDEEPDYAFLQELFDDVLRANGDTNDGVYDWMLLNDGKGWESSSSHFSVVAMKRRKNYLGLNVVQNDDSRKKNSTLQTQNMRFKSSYGVRGPRNYSSFDALPSKNAPLVRQEQSASKKTIYAHSSRGYDRVRPMYVSQPSNNAVGVNHPNDNSDSEAKGGFFDMICCRCFS.

The Protein kinase domain maps to 12-282 (YRVGRKIGEG…FLQELFDDVL (271 aa)). ATP is bound by residues 18–26 (IGEGSFGVI) and Lys-41. The active-site Proton acceptor is Asp-131. Ser-361 carries the post-translational modification Phosphoserine.

The protein belongs to the protein kinase superfamily. CK1 Ser/Thr protein kinase family. Casein kinase I subfamily.

The protein localises to the cytoplasm. It catalyses the reaction L-seryl-[protein] + ATP = O-phospho-L-seryl-[protein] + ADP + H(+). The enzyme catalyses L-threonyl-[protein] + ATP = O-phospho-L-threonyl-[protein] + ADP + H(+). Casein kinases are operationally defined by their preferential utilization of acidic proteins such as caseins as substrates. May contribute to the regulation of morphology. The sequence is that of Casein kinase I homolog 2 (cki2) from Schizosaccharomyces pombe (strain 972 / ATCC 24843) (Fission yeast).